Consider the following 364-residue polypeptide: MQERHTEQDYRALLIADTPIIDVRAPIEFEQGAMPAAINLPLMNNDERAAVGTCYKQQGSDAALALGHKLVAGEIRQQRIDAWRAACLQNPQGILCCARGGQRSHIVQSWLHAAGIDYPLVEGGYKALRQTAIQATIELAQKPIVLIGGCTGSGKTLLVQQQPNGVDLEGLARHRGSAFGRTLQPQLSQASFENLLAAEMLKTDARQDLRLWVLEDESRMIGSNHLPECLRERMTQAAIAVVEDPFEIRLERLNEEYFLRMHHDFTHAYGDEQGWQEYCEYLHHGLSAIKRRLGLQRYNELAAQLDTALTTQLTTGSTDGHLAWLVPLLKEYYDPMYRYQLEKKAEKVVFRGEWAEVAEWVKAR.

The Rhodanese domain occupies 14 to 137 (LIADTPIIDV…LRQTAIQATI (124 aa)). The active-site S-selanylcysteine intermediate is the C97.

This sequence belongs to the SelU family. Monomer.

It carries out the reaction 5-methylaminomethyl-2-thiouridine(34) in tRNA + selenophosphate + (2E)-geranyl diphosphate + H2O + H(+) = 5-methylaminomethyl-2-selenouridine(34) in tRNA + (2E)-thiogeraniol + phosphate + diphosphate. It catalyses the reaction 5-methylaminomethyl-2-thiouridine(34) in tRNA + (2E)-geranyl diphosphate = 5-methylaminomethyl-S-(2E)-geranyl-thiouridine(34) in tRNA + diphosphate. The enzyme catalyses 5-methylaminomethyl-S-(2E)-geranyl-thiouridine(34) in tRNA + selenophosphate + H(+) = 5-methylaminomethyl-2-(Se-phospho)selenouridine(34) in tRNA + (2E)-thiogeraniol. The catalysed reaction is 5-methylaminomethyl-2-(Se-phospho)selenouridine(34) in tRNA + H2O = 5-methylaminomethyl-2-selenouridine(34) in tRNA + phosphate. Its function is as follows. Involved in the post-transcriptional modification of the uridine at the wobble position (U34) of tRNA(Lys), tRNA(Glu) and tRNA(Gln). Catalyzes the conversion of 2-thiouridine (S2U-RNA) to 2-selenouridine (Se2U-RNA). Acts in a two-step process involving geranylation of 2-thiouridine (S2U) to S-geranyl-2-thiouridine (geS2U) and subsequent selenation of the latter derivative to 2-selenouridine (Se2U) in the tRNA chain. The polypeptide is tRNA 2-selenouridine synthase (Shigella boydii serotype 18 (strain CDC 3083-94 / BS512)).